The sequence spans 473 residues: Photosystem II CP43 reaction center protein (473 aa).

The propeptide occupies 1-14 (MKTLYSLRRFYHVE). Thr15 is modified (N-acetylthreonine). Thr15 bears the Phosphothreonine mark. 5 helical membrane passes run 69–93 (LFEV…PHLA), 134–155 (LIGP…KDKN), 178–200 (KACY…RIIT), 255–275 (KPWA…LSYS), and 291–312 (WFNN…ASQA). Residue Glu367 participates in [CaMn4O5] cluster binding. A helical membrane pass occupies residues 447-471 (RARAAAAGFEKGIERETEPVLFMKP).

The protein belongs to the PsbB/PsbC family. PsbC subfamily. In terms of assembly, PSII is composed of 1 copy each of membrane proteins PsbA, PsbB, PsbC, PsbD, PsbE, PsbF, PsbH, PsbI, PsbJ, PsbK, PsbL, PsbM, PsbT, PsbX, PsbY, PsbZ, Psb30/Ycf12, at least 3 peripheral proteins of the oxygen-evolving complex and a large number of cofactors. It forms dimeric complexes. The cofactor is Binds multiple chlorophylls and provides some of the ligands for the Ca-4Mn-5O cluster of the oxygen-evolving complex. It may also provide a ligand for a Cl- that is required for oxygen evolution. PSII binds additional chlorophylls, carotenoids and specific lipids..

It is found in the plastid. Its subcellular location is the chloroplast thylakoid membrane. One of the components of the core complex of photosystem II (PSII). It binds chlorophyll and helps catalyze the primary light-induced photochemical processes of PSII. PSII is a light-driven water:plastoquinone oxidoreductase, using light energy to abstract electrons from H(2)O, generating O(2) and a proton gradient subsequently used for ATP formation. The sequence is that of Photosystem II CP43 reaction center protein from Mesostigma viride (Green alga).